Reading from the N-terminus, the 61-residue chain is Short neurotoxin 4 (61 aa).

Intrachain disulfides connect C3–C23, C17–C40, C42–C53, and C54–C59.

It belongs to the three-finger toxin family. Short-chain subfamily. Type I alpha-neurotoxin sub-subfamily. In terms of tissue distribution, expressed by the venom gland.

The protein resides in the secreted. Its function is as follows. Binds to muscle nicotinic acetylcholine receptor (nAChR) and inhibit acetylcholine from binding to the receptor, thereby impairing neuromuscular transmission. In Naja annulifera (Banded Egyptian cobra), this protein is Short neurotoxin 4.